The sequence spans 157 residues: MADKNERAIKVVAENRKARFNYAIEDTIEAGISLTGTEVKSVRSGKSTIAESYADSRGGEIWLINANIPEYLQANRFNHEPKRPRKLLLHRKQINKLMGAVERQGMTLIPLKLYFNEKGRAKLLLALAKGKQLHDKRETEKKRDWSREKGRLLRARG.

Basic and acidic residues predominate over residues 135-151 (DKRETEKKRDWSREKGR). Residues 135–157 (DKRETEKKRDWSREKGRLLRARG) are disordered.

This sequence belongs to the SmpB family.

It localises to the cytoplasm. Its function is as follows. Required for rescue of stalled ribosomes mediated by trans-translation. Binds to transfer-messenger RNA (tmRNA), required for stable association of tmRNA with ribosomes. tmRNA and SmpB together mimic tRNA shape, replacing the anticodon stem-loop with SmpB. tmRNA is encoded by the ssrA gene; the 2 termini fold to resemble tRNA(Ala) and it encodes a 'tag peptide', a short internal open reading frame. During trans-translation Ala-aminoacylated tmRNA acts like a tRNA, entering the A-site of stalled ribosomes, displacing the stalled mRNA. The ribosome then switches to translate the ORF on the tmRNA; the nascent peptide is terminated with the 'tag peptide' encoded by the tmRNA and targeted for degradation. The ribosome is freed to recommence translation, which seems to be the essential function of trans-translation. In Rhodopseudomonas palustris (strain BisB5), this protein is SsrA-binding protein.